Consider the following 582-residue polypeptide: MKQHTLQLEGVTLDVPNQNLSSNEKYARLINGLTADFKSGNVYAFMGTSGSGKTTTLETIAGLVPSGSRTGGRILVDGQERNPDEFPYEFAYGDQLGYIIDELTVEEFVYYYVVSSLPEESKERVREKMDEVLENLLNIGHIRHNKMKNISGGEQKRANLARTFTKMLLLEGELKVVLLDEPTSELDAGLALKLGEFLRDYARRSNSIVLVTVHQPGAELYNTFDNLLFMNNGEKLYLGPSRDFIKFLGTKGIHNDGGPETNMEFLFSLFTKGSKMSKKYEKQLEQIAKEMNEEKKEEKKLRTSDDTEINFIPNLYVSFQMAIRQIIIDWRNREILYSLAMPIAMALFLVTGKYIYKDFSIATIKASMLSLSLYYVMNPSGLMNDKHYVTEESNRKLYGAAEVWFSSLISDTLVSILKYCIFFGIIYAFGLISMDHAFLGQVLMYTLGGTVSSMLFRSMASPLSTLGKVFNTTMVLMFQLSGALLGAGALLGALTLWISVIPEGSIPQEEIDAFISNFFDSTGSTGSTSIFSKVGSWVIRFICLVPKVVRSFLRILFLMFHPFAFFHSSILDAEKSSYKLFF.

The region spanning 15–257 (VPNQNLSSNE…LGTKGIHNDG (243 aa)) is the ABC transporter domain. 47–54 (GTSGSGKT) provides a ligand contact to ATP. The ABC transmembrane type-2 domain maps to 316-519 (YVSFQMAIRQ…EIDAFISNFF (204 aa)). 6 helical membrane passes run 335-355 (ILYS…GKYI), 359-378 (FSIA…YVMN), 412-432 (TLVS…FGLI), 436-456 (HAFL…SMLF), 482-502 (GALL…SVIP), and 551-571 (SFLR…SSIL).

It belongs to the ABC transporter superfamily.

The protein resides in the membrane. The protein is ABC transporter-like protein ECU11_1340 of Encephalitozoon cuniculi (strain GB-M1) (Microsporidian parasite).